The sequence spans 222 residues: Pre-mRNA cleavage factor Im 25 kDa subunit 1 (222 aa).

The 128-residue stretch at 67–194 (GLRTCVEAVL…KLLAVPLCQL (128 aa)) folds into the Nudix hydrolase domain. Residues 94 to 96 (SIF) are interaction with RNA. Positions 101-122 (GRLRPGESDIEGLKRKLASKLS) match the Nudix box motif.

This sequence belongs to the Nudix hydrolase family. CPSF5 subfamily. Homodimer. Component of the cleavage factor Im (CFIm) complex. Forms a complex with cleavage and polyadenylation specificity factor (CPSF) subunits FIPS5.

The protein resides in the nucleus. In terms of biological role, component of the cleavage factor Im (CFIm) complex that plays a key role in pre-mRNA 3'-processing. Involved in association with CPSF6 or CPSF7 in pre-MRNA 3'-end poly(A) site cleavage and poly(A) addition. NUDT21/CPSF5 binds to cleavage and polyadenylation RNA substrates. The homodimer mediates simultaneous sequence-specific recognition of two 5'-UGUA-3' elements within the pre-mRNA. Binds to, but does not hydrolyze mono- and di-adenosine nucleotides. May have a role in mRNA export. This Arabidopsis thaliana (Mouse-ear cress) protein is Pre-mRNA cleavage factor Im 25 kDa subunit 1.